A 303-amino-acid chain; its full sequence is Monoglyceride lipase (303 aa).

The residue at position 10 (Thr-10) is a Phosphothreonine. Tyr-58 carries the 3'-nitrotyrosine modification. The Nucleophile role is filled by Ser-122. At Ser-189 the chain carries Phosphoserine. Active-site charge relay system residues include Asp-239 and His-269.

Belongs to the AB hydrolase superfamily. Monoacylglycerol lipase family. As to quaternary structure, homodimer. As to expression, ubiquitous. Highly expressed in adipose tissue, adrenal gland, ovary, heart, spleen, lung, skeletal muscle, kidney and testis. Highly expressed throughout the brain.

The protein localises to the cytoplasm. It is found in the cytosol. Its subcellular location is the membrane. It carries out the reaction Hydrolyzes glycerol monoesters of long-chain fatty acids.. It catalyses the reaction a 1-acylglycerol + H2O = glycerol + a fatty acid + H(+). The enzyme catalyses a 2-acylglycerol + H2O = glycerol + a fatty acid + H(+). The catalysed reaction is 1-octanoylglycerol + H2O = octanoate + glycerol + H(+). It carries out the reaction 2-(5Z,8Z,11Z,14Z-eicosatetraenoyl)-glycerol + H2O = glycerol + (5Z,8Z,11Z,14Z)-eicosatetraenoate + H(+). It catalyses the reaction 1-decanoylglycerol + H2O = decanoate + glycerol + H(+). The enzyme catalyses 1-dodecanoylglycerol + H2O = dodecanoate + glycerol + H(+). The catalysed reaction is 1-tetradecanoylglycerol + H2O = tetradecanoate + glycerol + H(+). It carries out the reaction 2-hexadecanoylglycerol + H2O = glycerol + hexadecanoate + H(+). It catalyses the reaction 1-(9Z-octadecenoyl)-glycerol + H2O = glycerol + (9Z)-octadecenoate + H(+). The enzyme catalyses 2-(9Z-octadecenoyl)-glycerol + H2O = glycerol + (9Z)-octadecenoate + H(+). The catalysed reaction is 2-(9Z,12Z-octadecadienoyl)-glycerol + H2O = (9Z,12Z)-octadecadienoate + glycerol + H(+). It carries out the reaction 1-(5Z,8Z,11Z,14Z-eicosatetraenoyl)-glycerol + H2O = glycerol + (5Z,8Z,11Z,14Z)-eicosatetraenoate + H(+). It catalyses the reaction 1-(9Z,12Z-octadecadienoyl)-glycerol + H2O = (9Z,12Z)-octadecadienoate + glycerol + H(+). The enzyme catalyses 1-hexadecanoylglycerol + H2O = glycerol + hexadecanoate + H(+). The catalysed reaction is 1-octadecanoylglycerol + H2O = octadecanoate + glycerol + H(+). It carries out the reaction prostaglandin E2 1-glyceryl ester + H2O = prostaglandin E2 + glycerol + H(+). It catalyses the reaction prostaglandin D2-1-glycerol ester + H2O = prostaglandin D2 + glycerol + H(+). The enzyme catalyses 2-glyceryl-15-deoxy-Delta(12,14)-prostaglandin J2 + H2O = 15-deoxy-Delta(12,14)-prostaglandin J2 + glycerol + H(+). The catalysed reaction is prostaglandin F2alpha 1-glyceryl ester + H2O = prostaglandin F2alpha + glycerol + H(+). Its pathway is glycerolipid metabolism; triacylglycerol degradation. Converts monoacylglycerides to free fatty acids and glycerol. Hydrolyzes the endocannabinoid 2-arachidonoylglycerol, and thereby contributes to the regulation of endocannabinoid signaling, nociperception and perception of pain. Regulates the levels of fatty acids that serve as signaling molecules and promote cancer cell migration, invasion and tumor growth. This Rattus norvegicus (Rat) protein is Monoglyceride lipase.